A 626-amino-acid polypeptide reads, in one-letter code: Polyphenol oxidase C, chloroplastic (626 aa).

A chloroplast-targeting transit peptide spans 1–83 (MASLCSNSST…ANAIPLAASA (83 aa)). Intrachain disulfides connect cysteine 94/cysteine 110 and cysteine 109/cysteine 177. Residues histidine 176, histidine 194, histidine 203, histidine 324, histidine 328, and histidine 366 each coordinate Cu cation. The segment at residues 180–194 (CNGGYSIDGKVLQVH) is a cross-link (2'-(S-cysteinyl)-histidine (Cys-His)).

The protein belongs to the tyrosinase family. The cofactor is Cu(2+).

Its subcellular location is the plastid. It is found in the chloroplast thylakoid lumen. The enzyme catalyses 2 catechol + O2 = 2 1,2-benzoquinone + 2 H2O. Catalyzes the oxidation of mono- and o-diphenols to o-diquinones. The sequence is that of Polyphenol oxidase C, chloroplastic from Solanum lycopersicum (Tomato).